We begin with the raw amino-acid sequence, 543 residues long: EH domain-containing protein 2 (543 aa).

Ser3 and Ser44 each carry phosphoserine. The 232-residue stretch at 55-286 (FDGKPMVLVA…DLFRDIQGLP (232 aa)) folds into the Dynamin-type G domain. The segment at 65–72 (GQYSTGKT) is G1 motif. 65–72 (GQYSTGKT) is an ATP binding site. Residues 91–92 (EP) are G2 motif. Residues 153-156 (DTPG) are G3 motif. Residues 219-222 (NKAD) are G4 motif. Lys220 contacts ATP. Position 243 (Val243) is a region of interest, G5 motif. Trp258 contacts ATP. Residues 320 to 340 (TVFGKENKKKQLILKLPVIFA) form a mediates membrane-binding region. Phosphoserine is present on residues Ser438, Ser468, Ser470, Ser484, and Ser493. Positions 449-537 (DKSKYDEIFY…RRLVPPSKRR (89 aa)) constitute an EH domain. Residues 481–516 (LPNSVLGRIWKLSDVDRDGMLDDEEFALASHLIEAK) enclose the EF-hand domain. The Ca(2+) site is built by Asp494, Asp496, Asp498, Met500, and Glu505. Residues 521-543 (GLPTNLPRRLVPPSKRRQKGSAE) are disordered. The span at 534 to 543 (SKRRQKGSAE) shows a compositional bias: basic residues.

The protein belongs to the TRAFAC class dynamin-like GTPase superfamily. Dynamin/Fzo/YdjA family. EHD subfamily. Homodimer and homooligomer. Interacts with EHD1. May also interact with EHD3 and EHD4. Interacts with MYOF. Interacts with EHBP1. Interacts with FER1L5 (via second C2 domain). Interacts with CAV1 in a cholesterol-dependent manner. Interacts (via EH domain) with PACSIN2 (via NPF motifs); this interaction probably stabilizes the caveolae. In terms of tissue distribution, detected in lung and adipocytes. Detected at lower levels in heart and skeletal muscle.

The protein localises to the cell membrane. The protein resides in the membrane. It is found in the caveola. It localises to the endosome membrane. Its subcellular location is the cytoplasm. The protein localises to the cytosol. With respect to regulation, the very low intrinsic ATPase activity is increased upon interaction with liposomes. ATP- and membrane-binding protein that controls membrane reorganization/tubulation upon ATP hydrolysis. Plays a role in membrane trafficking between the plasma membrane and endosomes. Important for the internalization of GLUT4. Required for fusion of myoblasts to skeletal muscle myotubes. Required for normal translocation of FER1L5 to the plasma membrane. Regulates the equilibrium between cell surface-associated and cell surface-dissociated caveolae by constraining caveolae at the cell membrane. The polypeptide is EH domain-containing protein 2 (Mus musculus (Mouse)).